A 1069-amino-acid polypeptide reads, in one-letter code: Adenylate-forming reductase (1069 aa).

Positions 20-391 (HPEDPKAVKS…WKLRQDINYR (372 aa)) are adenylation (A) domain. AMP contacts are provided by residues H262, 357 to 358 (AH), T362, and 437 to 440 (AVGR). The Carrier domain occupies 576–656 (DSLEEDLKDL…KLGASLRHLA (81 aa)). S612 is modified (O-(pantetheine 4'-phosphoryl)serine). The segment at 686-1032 (TVLLTGSTGN…TGKVILDTSR (347 aa)) is reductase (R) domain. NADP(+) is bound by residues 693–696 (TGNL), R719, 785–787 (NAW), Y863, and K867.

Belongs to the adenylate-forming reductase family.

It catalyses the reaction 5-methylorsellinate + ATP + NADPH + H(+) = 2,4-dihydroxy 5,6-dimethylbenzaldehyde + AMP + diphosphate + NADP(+). It functions in the pathway secondary metabolite biosynthesis. Its function is as follows. Non-canonical non-ribosomal peptide synthetase; part of the cluster A that mediates the biosynthesis of azasperpyranones, members of the azaphilone family that exhibit anti-cancer activities. Azasperpyranones are synthesized by 2 clusters, A and B. Cluster A is responsible for the production of the polyhydric phenol moiety while the azaphilonoid scaffold is produced by the cluster B. The non-reducing polyketide synthase ATEG_03629 produces 5-methyl orsellinic acid, which is then reduced to 5-methyl orsellinic aldehyde by the NRPS-like protein ATEG_03630. 5-methyl orsellinic aldehyde is then first hydroxylated by the FAD-dependent monooxygenase ATEG_03635 and subsequently hydroxylated by the cytochrome P450 monooxygenase ATEG_03631 to produce the unstable polyhydric phenol precursor of azasperpyranones. On the other hand, the polyketide synthase ATEG_07659 is responsible for producing the 3,5-dimethyloctadienone moiety from acetyl-CoA, three malonyl-CoA, and two S-adenosyl methionines (SAM). The 3,5-dimethyloctadienone moiety is then loaded onto the SAT domain of ATEG_07661 and extended with four malonyl-CoA and one SAM, which leads to the formation of 2,4-dihydroxy-6-(5,7-dimethyl-2-oxo-trans-3-trans-5-nonadienyl)-3-methylbenzaldehyde (compound 8) after reductive release and aldol condensation. The FAD-dependent monooxygenase ATEG_07662 is the next enzyme in the biosynthesis sequence and hydroxylates the side chain at the benzylic position of compound 8. In Aspergillus nidulans, afoF, the ortholog of the FAD-dependent oxygenase ATEG_07660, is the key enzyme for the biosynthesis of asperfuranone by catalyzing the hydroxylation at C-8 of to prevent the formation of a six-membered ring hemiacetal intermediate and thus facilitating the formation of a five-membered ring to produce asperfuranone. In Aspergillus terreus, ATEG_07660 is probably not functional, which leads to the formation of the six-membered ring hemiacetal intermediate presperpyranone instead of asperfuranone. Finally, ATEG_03636 is involved in the condensation of the polyhydric phenol moiety produced by cluster A and the perasperpyranone precursor produced by cluster B, to yield azasperpyranone A. Further modifications of azasperpyranone A result in the production of derivatives, including azasperpyranone B to F. In Aspergillus terreus (strain NIH 2624 / FGSC A1156), this protein is Adenylate-forming reductase.